Consider the following 2476-residue polypeptide: Zonadhesin (2476 aa).

The first 29 residues, 1 to 29, serve as a signal peptide directing secretion; that stretch reads MLGLPALAGPMAMPHPPLIPSTPTLLAFS. Residues 30-2418 lie on the Extracellular side of the membrane; it reads FPGGFYMLLD…SPKKPEASNR (2389 aa). MAM domains follow at residues 31 to 144 and 147 to 312; these read PGGF…PCEE and PQCD…TCRG. Asparagine 109 and asparagine 269 each carry an N-linked (GlcNAc...) asparagine glycan. Disordered stretches follow at residues 313 to 332, 358 to 462, and 537 to 632; these read PSETSVSTEKPVAPTEKPTV, PTVP…TERT, and ERTT…RTTI. Residues 319–687 form a 53 X approximate heptapeptide repeats (mucin-like domain) region; the sequence is STEKPVAPTE…ATTVTPRTTI (369 aa). The segment covering 358–373 has biased composition (low complexity); sequence PTVPTEKPTIPTEKST. Residues 400 to 412 are compositionally biased toward pro residues; it reads TTPPEGPAVPPKG. The segment covering 423–433 has biased composition (basic and acidic residues); the sequence is HTEKSTVHTEK. A compositionally biased stretch (low complexity) spans 451 to 462; it reads PTKRTTTPTERT. Residues 690-739 form the TIL 1 domain; sequence CPPNAHFERCACPVSCQSPTPNCELFCKPGCVCDPGFLFSGSHCVNASSC. 3 N-linked (GlcNAc...) asparagine glycosylation sites follow: asparagine 735, asparagine 758, and asparagine 833. Residues 740–794 form the VWFC 1 domain; that stretch reads DCFYNDNYYKLGTDWFSPNCTEHCHCRPSSRMECQTFKCGTHTVCQLKNGQYGCH. The VWFD 1 domain occupies 799-976; the sequence is ATCSVYGDPH…TSEDADQQCE (178 aa). Intrachain disulfides connect cysteine 801/cysteine 936 and cysteine 823/cysteine 975. Residues 943–983 are disordered; that stretch reads SSNDNQKPDGSPAKDEKELGSSWQTSEDADQQCEENQVSPP. Residues 1070-1123 enclose the TIL 2 domain; it reads CPRNSRYTLCARLCPDTCHSEFSGRACKDRCVEGCECDPGFVLSGLQCVSRSEC. Positions 1124-1180 constitute a VWFC 2 domain; sequence GCLDSTAGYVKVGERWFKPGCRQLCICEGNNRTRCVLWRCQAQEFCGQQDGIYGCHA. The N-linked (GlcNAc...) asparagine glycan is linked to asparagine 1154. The VWFD 2 domain maps to 1184–1364; that stretch reads ATCTVSGDPH…INELSEPGCF (181 aa). 2 disulfide bridges follow: cysteine 1186–cysteine 1324 and cysteine 1208–cysteine 1363. N-linked (GlcNAc...) asparagine glycosylation is found at asparagine 1329 and asparagine 1448. The 56-residue stretch at 1456–1511 folds into the TIL 3 domain; it reads CPSGSSYSTCANPCPATCLSLNNPSYCPSTLPCAEGCECQKGHILSGTSCVPLSQC. One can recognise a VWFC 3 domain in the interval 1512–1568; it reads GCTTQRGSYHPVGESWYTDNSCSRLCTCSAHNNISCRQASCKPSQMCWPQDGLIRCR. 3 N-linked (GlcNAc...) asparagine glycosylation sites follow: asparagine 1544, asparagine 1596, and asparagine 1654. Positions 1573–1751 constitute a VWFD 3 domain; it reads GVCRIPDTSH…RDKEIDPNCQ (179 aa). Disulfide bonds link cysteine 1575-cysteine 1712 and cysteine 1597-cysteine 1750. Basic and acidic residues predominate over residues 1747 to 1759; sequence DPNCQEDDRKTEA. The interval 1747–1768 is disordered; it reads DPNCQEDDRKTEAESQEQPSAN. N-linked (GlcNAc...) asparagine glycosylation occurs at asparagine 1843. The 57-residue stretch at 1851-1907 folds into the TIL 4 domain; that stretch reads CSAHSVYTSCVPSCLPSCQDPEGQCTGAGAPSTCEEGCICEPGYVLSEQQCVARSQC. Positions 1908–1963 constitute a VWFC 4 domain; it reads GCRDARGTFLPVGRFRLSSGCSQMCVCTAGAIECRPFTCPSGSQCEPNEDGKDFCQ. Asparagine 1965 carries an N-linked (GlcNAc...) asparagine glycan. The 178-residue stretch at 1968–2145 folds into the VWFD 4 domain; that stretch reads NLCSVFGDPH…WEVKAKEGHP (178 aa). A disulfide bond links cysteine 1970 and cysteine 2107. N-linked (GlcNAc...) asparagine glycosylation is found at asparagine 2122, asparagine 2165, and asparagine 2178. One can recognise a TIL 5 domain in the interval 2257 to 2310; that stretch reads CPANTVYQSCMTPCPASCATLAVPRACDGPCVEGCASLPGYIYSGAQSLPMAHC. One can recognise a VWFC 5 domain in the interval 2311 to 2365; sequence GCTNNGVYYQQGDSFVTENCSQRCTCASSGVLLCEPLSCRPGEICTLGNLTRGCF. N-linked (GlcNAc...) asparagine glycans are attached at residues asparagine 2329 and asparagine 2359. The region spanning 2366–2402 is the EGF-like domain; it reads RDSPCLQNPCQNDGRCREQGTHFTCECELGYGGDLCT. Intrachain disulfides connect cysteine 2370–cysteine 2381, cysteine 2375–cysteine 2390, and cysteine 2392–cysteine 2401. The chain crosses the membrane as a helical span at residues 2419-2439; the sequence is VAILLGMLMPTVLLVPAVTRV. The disordered stretch occupies residues 2438 to 2476; it reads RVSRKRRRRRRPSRERTQSQNRGKRAGTDCAPEQAYKVA. A compositionally biased stretch (basic residues) spans 2439-2450; it reads VSRKRRRRRRPS. The Cytoplasmic portion of the chain corresponds to 2440-2476; it reads SRKRRRRRRPSRERTQSQNRGKRAGTDCAPEQAYKVA.

Probably forms covalent oligomers. Post-translationally, the MAM domains and the mucin-like domains are missing from the zonadhesin that binds to the egg extracellular matrix. Processing might occur during sperm maturation and/or capacitation. In testis, primarily in haploid spermatids. Not in lung, liver, heart, spleen, brain, kidney, epididymis.

It is found in the cell membrane. Functionally, binds in a species-specific manner to the zona pellucida of the egg. May be involved in gamete recognition and/or signaling. This Sus scrofa (Pig) protein is Zonadhesin (ZAN).